Reading from the N-terminus, the 199-residue chain is Recombination protein RecR (199 aa).

A C4-type zinc finger spans residues 57 to 72 (CSICFNLTDTDPCAIC). A Toprim domain is found at 80 to 175 (RLLMVVEEAK…KVTRIAHGLP (96 aa)).

It belongs to the RecR family.

Its function is as follows. May play a role in DNA repair. It seems to be involved in an RecBC-independent recombinational process of DNA repair. It may act with RecF and RecO. This Carboxydothermus hydrogenoformans (strain ATCC BAA-161 / DSM 6008 / Z-2901) protein is Recombination protein RecR.